The primary structure comprises 374 residues: tRNA-specific 2-thiouridylase MnmA (374 aa).

Residues 8 to 15 (GLSGGVDS) and methionine 34 contribute to the ATP site. The segment at 104-106 (NPD) is interaction with target base in tRNA. Catalysis depends on cysteine 109, which acts as the Nucleophile. An intrachain disulfide couples cysteine 109 to cysteine 208. Glycine 134 is a binding site for ATP. The interval 158–160 (KDQ) is interaction with tRNA. Cysteine 208 acts as the Cysteine persulfide intermediate in catalysis. Positions 321–322 (RY) are interaction with tRNA.

This sequence belongs to the MnmA/TRMU family.

The protein resides in the cytoplasm. The enzyme catalyses S-sulfanyl-L-cysteinyl-[protein] + uridine(34) in tRNA + AH2 + ATP = 2-thiouridine(34) in tRNA + L-cysteinyl-[protein] + A + AMP + diphosphate + H(+). Its function is as follows. Catalyzes the 2-thiolation of uridine at the wobble position (U34) of tRNA, leading to the formation of s(2)U34. The sequence is that of tRNA-specific 2-thiouridylase MnmA from Mesoplasma florum (strain ATCC 33453 / NBRC 100688 / NCTC 11704 / L1) (Acholeplasma florum).